The chain runs to 21 residues: Putative NADH dehydrogenase subunit PS9 (21 aa).

In Pinus strobus (Eastern white pine), this protein is Putative NADH dehydrogenase subunit PS9.